The following is a 449-amino-acid chain: Maltoporin (449 aa).

A signal peptide spans 1–24; that stretch reads MITLRKLPLAVAVAAGVMSAQAMA.

It belongs to the porin LamB (TC 1.B.3) family. Homotrimer formed of three 18-stranded antiparallel beta-barrels, containing three independent channels.

Its subcellular location is the cell outer membrane. The enzyme catalyses beta-maltose(in) = beta-maltose(out). In terms of biological role, involved in the transport of maltose and maltodextrins. This Citrobacter koseri (strain ATCC BAA-895 / CDC 4225-83 / SGSC4696) protein is Maltoporin.